The following is a 671-amino-acid chain: UvrABC system protein B (671 aa).

In terms of domain architecture, Helicase ATP-binding spans 25–178 (EGIKKGYKHQ…DAMLKKLVEI (154 aa)). 38–45 (GVTGSGKT) lines the ATP pocket. The Beta-hairpin motif lies at 91–114 (YYDYYQPEAYIPETDTYIEKDALI). Residues 435 to 601 (QVEDLLEEIH…TVKSKIKDIL (167 aa)) form the Helicase C-terminal domain. Residues 626 to 661 (EETIKKLEQEMKHAAENLEFEKAAEIRDKIFKIKEK) form the UVR domain.

Belongs to the UvrB family. In terms of assembly, forms a heterotetramer with UvrA during the search for lesions. Interacts with UvrC in an incision complex.

It is found in the cytoplasm. Functionally, the UvrABC repair system catalyzes the recognition and processing of DNA lesions. A damage recognition complex composed of 2 UvrA and 2 UvrB subunits scans DNA for abnormalities. Upon binding of the UvrA(2)B(2) complex to a putative damaged site, the DNA wraps around one UvrB monomer. DNA wrap is dependent on ATP binding by UvrB and probably causes local melting of the DNA helix, facilitating insertion of UvrB beta-hairpin between the DNA strands. Then UvrB probes one DNA strand for the presence of a lesion. If a lesion is found the UvrA subunits dissociate and the UvrB-DNA preincision complex is formed. This complex is subsequently bound by UvrC and the second UvrB is released. If no lesion is found, the DNA wraps around the other UvrB subunit that will check the other stand for damage. This chain is UvrABC system protein B, found in Thermodesulfovibrio yellowstonii (strain ATCC 51303 / DSM 11347 / YP87).